The primary structure comprises 315 residues: ATP synthase gamma chain (315 aa).

It belongs to the ATPase gamma chain family. F-type ATPases have 2 components, CF(1) - the catalytic core - and CF(0) - the membrane proton channel. CF(1) has five subunits: alpha(3), beta(3), gamma(1), delta(1), epsilon(1). CF(0) has three main subunits: a, b and c.

It is found in the cellular thylakoid membrane. Produces ATP from ADP in the presence of a proton gradient across the membrane. The gamma chain is believed to be important in regulating ATPase activity and the flow of protons through the CF(0) complex. In Synechococcus sp. (strain RCC307), this protein is ATP synthase gamma chain.